The primary structure comprises 298 residues: Glutamyl-Q tRNA(Asp) synthetase (298 aa).

L-glutamate-binding positions include 9-13 and Glu45; that span reads RFAPS. The 'HIGH' region motif lies at 12–22; sequence PSPTGLLHAGS. Zn(2+)-binding residues include Cys101, Cys103, Tyr121, and Cys125. Residues Tyr179 and Arg197 each coordinate L-glutamate. Residues 235–239 carry the 'KMSKS' region motif; the sequence is KLSKQ. Residue Lys238 coordinates ATP.

The protein belongs to the class-I aminoacyl-tRNA synthetase family. GluQ subfamily. The cofactor is Zn(2+).

Functionally, catalyzes the tRNA-independent activation of glutamate in presence of ATP and the subsequent transfer of glutamate onto a tRNA(Asp). Glutamate is transferred on the 2-amino-5-(4,5-dihydroxy-2-cyclopenten-1-yl) moiety of the queuosine in the wobble position of the QUC anticodon. The sequence is that of Glutamyl-Q tRNA(Asp) synthetase from Chromobacterium violaceum (strain ATCC 12472 / DSM 30191 / JCM 1249 / CCUG 213 / NBRC 12614 / NCIMB 9131 / NCTC 9757 / MK).